We begin with the raw amino-acid sequence, 622 residues long: FERM domain-containing protein 6 (622 aa).

The region spanning R16–Q328 is the FERM domain. Residues K364–R445 are disordered. Low complexity-rich tracts occupy residues H384–S395 and S425–V438. S522 carries the post-translational modification Phosphoserine. T523 carries the phosphothreonine modification. S525, S542, and S544 each carry phosphoserine.

Its subcellular location is the cytoplasm. The protein localises to the cell membrane. The protein is FERM domain-containing protein 6 (FRMD6) of Homo sapiens (Human).